The chain runs to 108 residues: Protein YcgL (108 aa).

One can recognise a YcgL domain in the interval 12-96 (MFCVIYRSSK…PPEDLLKQHL (85 aa)).

This is Protein YcgL from Escherichia coli (strain K12 / MC4100 / BW2952).